The primary structure comprises 2345 residues: Acetyl-CoA carboxylase 1 (2345 aa).

Methionine 1 carries the post-translational modification N-acetylmethionine. A phosphoserine mark is found at serine 5, serine 23, serine 25, serine 29, serine 34, serine 47, serine 49, and serine 52. Residue threonine 57 is modified to Phosphothreonine. Serine 77 carries the phosphoserine modification. A Phosphoserine; by AMPK modification is found at serine 79. The 502-residue stretch at 116–617 folds into the Biotin carboxylation domain; the sequence is VIEKVLIANN…DTGWLDRLIA (502 aa). Residues 274-465 enclose the ATP-grasp domain; that stretch reads SKRILNVPQD…LPAAQLQIAM (192 aa). 314–319 is an ATP binding site; that stretch reads GGGGKG. Mg(2+)-binding residues include glutamate 423, glutamate 436, and asparagine 438. Mn(2+) contacts are provided by glutamate 423, glutamate 436, and asparagine 438. Residue arginine 440 is part of the active site. A Phosphothreonine modification is found at threonine 609. One can recognise a Biotinyl-binding domain in the interval 744–818; sequence FEKENDPSVM…DPGCVIAKMQ (75 aa). Lysine 785 carries the post-translational modification N6-biotinyllysine. Serine 834 bears the Phosphoserine mark. A phosphoserine; by AMPK; in vitro mark is found at serine 1200 and serine 1215. A Phosphoserine modification is found at serine 1217. Threonine 1226 bears the Phosphothreonine mark. Phosphoserine is present on residues serine 1258, serine 1262, and serine 1272. Lysine 1333 carries the N6-acetyllysine modification. Positions 1575 to 1913 constitute a CoA carboxyltransferase N-terminal domain; it reads PYVTKDLLQS…NVHSSVPLLN (339 aa). Positions 1575 to 2233 are carboxyltransferase; sequence PYVTKDLLQS…EDLVKKKIHS (659 aa). Positions 1822, 2126, and 2128 each coordinate CoA. Residues 1917 to 2233 form the CoA carboxyltransferase C-terminal domain; that stretch reads PIDRIIEFVP…EDLVKKKIHS (317 aa). Threonine 2152 carries the post-translational modification Phosphothreonine.

In terms of assembly, monomer, homodimer, and homotetramer. Can form filamentous polymers. Interacts in its inactive phosphorylated form with the BRCT domains of BRCA1 which prevents ACACA dephosphorylation and inhibits lipid synthesis. Interacts with MID1IP1; interaction with MID1IP1 promotes oligomerization and increases its activity. Requires Mg(2+) as cofactor. Mn(2+) is required as a cofactor. The cofactor is biotin. In terms of processing, the N-terminus is blocked. Phosphorylation on Ser-1262 is required for interaction with BRCA1. Post-translationally, phosphorylation at Ser-79 by AMPK inactivates enzyme activity. Phosphorylated in vitro at Ser-1200 and Ser-1215 by AMPK; the relevance of phosphorylation of these sites in vivo is however unclear. In terms of processing, the biotin cofactor is covalently attached to the central biotinyl-binding domain and is required for the catalytic activity.

It is found in the cytoplasm. The protein localises to the cytosol. The enzyme catalyses hydrogencarbonate + acetyl-CoA + ATP = malonyl-CoA + ADP + phosphate + H(+). The protein operates within lipid metabolism; malonyl-CoA biosynthesis; malonyl-CoA from acetyl-CoA: step 1/1. With respect to regulation, inhibited by phosphorylation. Citrate promotes oligomerization of the protein into filaments that correspond to the most active form of the carboxylase. In terms of biological role, cytosolic enzyme that catalyzes the carboxylation of acetyl-CoA to malonyl-CoA, the first and rate-limiting step of de novo fatty acid biosynthesis. This is a 2 steps reaction starting with the ATP-dependent carboxylation of the biotin carried by the biotin carboxyl carrier (BCC) domain followed by the transfer of the carboxyl group from carboxylated biotin to acetyl-CoA. The chain is Acetyl-CoA carboxylase 1 from Rattus norvegicus (Rat).